The primary structure comprises 643 residues: Threonine--tRNA ligase (643 aa).

The TGS domain occupies 3-64; it reads DVVKITFPDG…EEDGAISIIT (62 aa). Residues 245 to 542 form a catalytic region; that stretch reads DHRKLGKELD…LIEEYKGAFP (298 aa). 3 residues coordinate Zn(2+): Cys-338, His-389, and His-519.

Belongs to the class-II aminoacyl-tRNA synthetase family. As to quaternary structure, homodimer. It depends on Zn(2+) as a cofactor.

The protein resides in the cytoplasm. The enzyme catalyses tRNA(Thr) + L-threonine + ATP = L-threonyl-tRNA(Thr) + AMP + diphosphate + H(+). Catalyzes the attachment of threonine to tRNA(Thr) in a two-step reaction: L-threonine is first activated by ATP to form Thr-AMP and then transferred to the acceptor end of tRNA(Thr). Also edits incorrectly charged L-seryl-tRNA(Thr). This chain is Threonine--tRNA ligase, found in Anoxybacillus flavithermus (strain DSM 21510 / WK1).